The following is a 232-amino-acid chain: Ribonuclease 3 (232 aa).

The region spanning 5 to 134 (QTVLKNHFAI…FLGALLLDKD (130 aa)) is the RNase III domain. E47 contacts Mg(2+). The active site involves D51. Mg(2+) contacts are provided by D120 and E123. The active site involves E123. The DRBM domain occupies 160–229 (DYKTHLQELL…AKNAVEKGLD (70 aa)).

The protein belongs to the ribonuclease III family. As to quaternary structure, homodimer. It depends on Mg(2+) as a cofactor.

It localises to the cytoplasm. The enzyme catalyses Endonucleolytic cleavage to 5'-phosphomonoester.. Digests double-stranded RNA. Involved in the processing of primary rRNA transcript to yield the immediate precursors to the large and small rRNAs (23S and 16S). Processes some mRNAs, and tRNAs when they are encoded in the rRNA operon. Processes pre-crRNA and tracrRNA of type II CRISPR loci if present in the organism. The sequence is that of Ribonuclease 3 from Streptococcus pneumoniae (strain Taiwan19F-14).